The primary structure comprises 401 residues: Prion-like-(Q/N-rich) domain-bearing protein 8 (401 aa).

Over residues Gln70–Gln84 the composition is skewed to low complexity. Disordered stretches follow at residues Gln70–Gln109 and Tyr122–Gln303. 2 stretches are compositionally biased toward polar residues: residues Thr89–Gln109 and Ser125–Pro134. 3 stretches are compositionally biased toward low complexity: residues Asn135 to Gly181, Asn188 to Gly239, and Phe247 to Asn289.

As to expression, expressed in the pharyngeal glands.

The polypeptide is Prion-like-(Q/N-rich) domain-bearing protein 8 (pqn-8) (Caenorhabditis elegans).